Consider the following 143-residue polypeptide: Hexaprenyl-diphosphate synthase small subunit ((2E,6E)-farnesyl-diphosphate specific) (143 aa).

As to quaternary structure, dimer of heterodimer or heterotetramer composed of a small (Hexs-a) and large (Hexs-B) subunit.

The catalysed reaction is 3 isopentenyl diphosphate + (2E,6E)-farnesyl diphosphate = all-trans-hexaprenyl diphosphate + 3 diphosphate. Catalyzes the condensation of three molecules of isopentenyl diphosphate with farnesyl diphosphate (FPP) to yield (all-E)-hexaprenyl diphosphate (HexPP; C30), the precursor of the prenyl side chain of menaquinone-6. Large subunit Hexs-B catalyzes the condensation reaction and the final product chain length is cooperatively regulated by both the Hexs-A and Hexs-B subunits using the whole size of the hydrophobic cleft as a ruler. The polypeptide is Hexaprenyl-diphosphate synthase small subunit ((2E,6E)-farnesyl-diphosphate specific) (hexs-a) (Micrococcus luteus (Micrococcus lysodeikticus)).